We begin with the raw amino-acid sequence, 103 residues long: MAAVSINVTTVKPLGDRVFVKVSPSEEKTAGGIFLPDAAKEKPQIGEVVAVGPGKRNDDGSRTPVEVGVGDKVLYSKYAGTDIKLGGEEFVLLSEKDILAAVS.

The protein belongs to the GroES chaperonin family. As to quaternary structure, heptamer of 7 subunits arranged in a ring. Interacts with the chaperonin GroEL.

The protein localises to the cytoplasm. Together with the chaperonin GroEL, plays an essential role in assisting protein folding. The GroEL-GroES system forms a nano-cage that allows encapsulation of the non-native substrate proteins and provides a physical environment optimized to promote and accelerate protein folding. GroES binds to the apical surface of the GroEL ring, thereby capping the opening of the GroEL channel. The polypeptide is Co-chaperonin GroES (Microcystis aeruginosa (strain NIES-843 / IAM M-2473)).